A 567-amino-acid polypeptide reads, in one-letter code: Probable transport protein (567 aa).

Positions 1 to 30 (MSDRVEVNERRSDSVSEKEPARDDARKDVT) are enriched in basic and acidic residues. A disordered region spans residues 1-38 (MSDRVEVNERRSDSVSEKEPARDDARKDVTDDQEDAPP). At 1–46 (MSDRVEVNERRSDSVSEKEPARDDARKDVTDDQEDAPPFMTANNAR) the chain is on the cytoplasmic side. A helical membrane pass occupies residues 47 to 67 (VMLVQAIGGSLNGYSIGFVGV). The Extracellular segment spans residues 68-160 (YSTLFGYSTN…PSGYSSSESG (93 aa)). The chain crosses the membrane as a helical span at residues 161–181 (IFAGSMIAGCLIGSVFAGPLA). The Cytoplasmic segment spans residues 182–189 (SKIGARLS). Residues 190–210 (FLLVGLVGVVASVMYHASCAA) form a helical membrane-spanning segment. Residues 211 to 212 (DE) are Extracellular-facing. The chain crosses the membrane as a helical span at residues 213–233 (FWVLIVGRFVIGLFLGVICVA). At 234-249 (CPVYTDQNAHPKWKRT) the chain is on the cytoplasmic side. Residues 250-270 (IGVMFQVFTTLGIFVAALMGL) form a helical membrane-spanning segment. The Extracellular segment spans residues 271-289 (ALGQSIRFDHDGDQKVMAR). A helical membrane pass occupies residues 290–310 (MQGLCVFSTLFSLLTVVLGIV). The Cytoplasmic portion of the chain corresponds to 311-341 (TRESRAKFDGGEEGRAELNPSEYGYVEMIPR). The helical transmembrane segment at 342–362 (LLMGCVMAGTLQLTGINAVMN) threads the bilayer. Residues 363-366 (YAPT) are Extracellular-facing. Residues 367–387 (IMGSLGLAPLVGNFVVMLWNF) traverse the membrane as a helical segment. At 388-404 (VTTLASIPLSYVFTMRH) the chain is on the cytoplasmic side. Residues 405–425 (VFLFGSIFTSCMCLFMCGIPV) traverse the membrane as a helical segment. The Extracellular segment spans residues 426–437 (YPGVSKKLEAKN). Residues 438–458 (GVAITGILLFILGFEVCVGPC) form a helical membrane-spanning segment. Over 459 to 480 (YYVLTQDMFPPSFRPRGASFTQ) the chain is Cytoplasmic. A helical transmembrane segment spans residues 481–501 (VAQFIFNLIINVCYPIATESI). The Extracellular segment spans residues 502–514 (SGGPSGNQDKGQA). The chain crosses the membrane as a helical span at residues 515–535 (VAFIFFGGLGLICFVIQVFFL). The Cytoplasmic segment spans residues 536-567 (HPWDEERDGKKVVAPAIGKKELSEESIGNRAE).

This sequence belongs to the major facilitator superfamily. Sugar transporter (TC 2.A.1.1) family.

The protein resides in the membrane. Probable membrane transport protein. The sequence is that of Probable transport protein (PRO-1) from Leishmania enriettii.